A 247-amino-acid chain; its full sequence is Leucyl/phenylalanyl-tRNA--protein transferase (247 aa).

Belongs to the L/F-transferase family.

Its subcellular location is the cytoplasm. It carries out the reaction N-terminal L-lysyl-[protein] + L-leucyl-tRNA(Leu) = N-terminal L-leucyl-L-lysyl-[protein] + tRNA(Leu) + H(+). It catalyses the reaction N-terminal L-arginyl-[protein] + L-leucyl-tRNA(Leu) = N-terminal L-leucyl-L-arginyl-[protein] + tRNA(Leu) + H(+). The catalysed reaction is L-phenylalanyl-tRNA(Phe) + an N-terminal L-alpha-aminoacyl-[protein] = an N-terminal L-phenylalanyl-L-alpha-aminoacyl-[protein] + tRNA(Phe). Functions in the N-end rule pathway of protein degradation where it conjugates Leu, Phe and, less efficiently, Met from aminoacyl-tRNAs to the N-termini of proteins containing an N-terminal arginine or lysine. This chain is Leucyl/phenylalanyl-tRNA--protein transferase, found in Solidesulfovibrio magneticus (strain ATCC 700980 / DSM 13731 / RS-1) (Desulfovibrio magneticus).